The chain runs to 281 residues: NAD kinase (281 aa).

Aspartate 66 functions as the Proton acceptor in the catalytic mechanism. NAD(+)-binding positions include 66–67 (DG), 137–138 (ND), arginine 148, arginine 165, aspartate 167, and 178–183 (TAYSMS).

It belongs to the NAD kinase family. A divalent metal cation serves as cofactor.

The protein localises to the cytoplasm. It catalyses the reaction NAD(+) + ATP = ADP + NADP(+) + H(+). Functionally, involved in the regulation of the intracellular balance of NAD and NADP, and is a key enzyme in the biosynthesis of NADP. Catalyzes specifically the phosphorylation on 2'-hydroxyl of the adenosine moiety of NAD to yield NADP. This is NAD kinase from Chlorobium phaeovibrioides (strain DSM 265 / 1930) (Prosthecochloris vibrioformis (strain DSM 265)).